The sequence spans 130 residues: Small ribosomal subunit protein uS8 (130 aa).

This sequence belongs to the universal ribosomal protein uS8 family. In terms of assembly, part of the 30S ribosomal subunit. Contacts proteins S5 and S12.

Its function is as follows. One of the primary rRNA binding proteins, it binds directly to 16S rRNA central domain where it helps coordinate assembly of the platform of the 30S subunit. This is Small ribosomal subunit protein uS8 from Ruegeria pomeroyi (strain ATCC 700808 / DSM 15171 / DSS-3) (Silicibacter pomeroyi).